The sequence spans 538 residues: MATITTLASSVPLFRPYSFPGGSSRKPKKDNLSIKPPATSSLKVNAKLASADDTSSNFNKDNWLASADELSRSFPPGFLFGGGSASYQYEGAVKEGGRTPSIWDTFAHEFPDKIADGSNGDVAVDFYHRYKDDVKLMKKIGVNGFRFSISWTRILPSGKLCGGVNKEGVAFYNSLINELLANGIEPFVTIFHWDLPQGLENEYDGFLSGQIVNDYRDYAEVCFQEFGDRVKFWTTLNEPWTFCYNGYVNGSFAPGRCSTCTAGNSGTEPYLVAHNLLLSHAAVAQLYKNKYQASQKGQIGIVLVCFWMVPYSDCPYDCEAAQRALDFMLGWFLHPLTYGDYPESMRHLVGERLPQFTEMQAMMMKGSIDFLGLNYYTSIYAANNESPNPHDISYTTDSRVNLFQKRDGILIGPATGTPAFCFCPEGIRDLLVYTKEKYNNPIIYITECGLAEANINTVDQGVKDVERVEFYYEHLKFLRSAIKKGVNVKGFFTWSLLDDWEWNSGFNVRFGIVYIDHEDGLKRYLKYSALWFKKLFGK.

The transit peptide at 1–66 directs the protein to the chloroplast; it reads MATITTLASS…NFNKDNWLAS (66 aa). Residues 18-37 are disordered; sequence SFPGGSSRKPKKDNLSIKPP. A beta-D-glucoside contacts are provided by residues glutamine 88, histidine 192, and 237 to 238; that span reads NE. The Proton donor role is filled by glutamate 238. Cysteine 257 and cysteine 260 are joined by a disulfide. A beta-D-glucoside contacts are provided by residues tyrosine 376, glutamate 447, tryptophan 494, 501-502, and phenylalanine 510; that span reads EW. The active-site Nucleophile is the glutamate 447.

It belongs to the glycosyl hydrolase 1 family. As to expression, expressed in young and mature leaves, but not in fruit and stem.

It localises to the plastid. It is found in the chloroplast. The catalysed reaction is 7-[beta-D-apiofuranosyl-(1-&gt;6)-beta-D-glucopyranosyloxy]isoflavonoid + H2O = a 7-hydroxyisoflavonoid + beta-D-apiofuranosyl-(1-&gt;6)-D-glucose.. Disaccharide-specific acuminosidase, hydrolyzes the beta-glycosidic bond between p-allylphenol and acuminose with retention of anomeric configuration. Has highest activity towards furcatin, and lower activity towards beta-primeverosides and beta-vicianoside. Has very low activity towards beta-gentobiosides. The protein is Furcatin hydrolase of Viburnum furcatum (Scarlet leaved viburnum).